Reading from the N-terminus, the 366-residue chain is Anhydro-N-acetylmuramic acid kinase (366 aa).

10–17 (GTSMDGID) is a binding site for ATP.

This sequence belongs to the anhydro-N-acetylmuramic acid kinase family.

The catalysed reaction is 1,6-anhydro-N-acetyl-beta-muramate + ATP + H2O = N-acetyl-D-muramate 6-phosphate + ADP + H(+). It functions in the pathway amino-sugar metabolism; 1,6-anhydro-N-acetylmuramate degradation. The protein operates within cell wall biogenesis; peptidoglycan recycling. Catalyzes the specific phosphorylation of 1,6-anhydro-N-acetylmuramic acid (anhMurNAc) with the simultaneous cleavage of the 1,6-anhydro ring, generating MurNAc-6-P. Is required for the utilization of anhMurNAc either imported from the medium or derived from its own cell wall murein, and thus plays a role in cell wall recycling. This Legionella pneumophila subsp. pneumophila (strain Philadelphia 1 / ATCC 33152 / DSM 7513) protein is Anhydro-N-acetylmuramic acid kinase.